The sequence spans 320 residues: o-succinylbenzoate synthase (320 aa).

The active-site Proton donor is the lysine 133. Positions 161, 190, and 213 each coordinate Mg(2+). Lysine 235 serves as the catalytic Proton acceptor.

It belongs to the mandelate racemase/muconate lactonizing enzyme family. MenC type 1 subfamily. A divalent metal cation is required as a cofactor.

It carries out the reaction (1R,6R)-6-hydroxy-2-succinyl-cyclohexa-2,4-diene-1-carboxylate = 2-succinylbenzoate + H2O. It functions in the pathway quinol/quinone metabolism; 1,4-dihydroxy-2-naphthoate biosynthesis; 1,4-dihydroxy-2-naphthoate from chorismate: step 4/7. It participates in quinol/quinone metabolism; menaquinone biosynthesis. Its function is as follows. Converts 2-succinyl-6-hydroxy-2,4-cyclohexadiene-1-carboxylate (SHCHC) to 2-succinylbenzoate (OSB). The protein is o-succinylbenzoate synthase of Escherichia coli O139:H28 (strain E24377A / ETEC).